The sequence spans 95 residues: Aspartyl/glutamyl-tRNA(Asn/Gln) amidotransferase subunit C (95 aa).

This sequence belongs to the GatC family. Heterotrimer of A, B and C subunits.

The catalysed reaction is L-glutamyl-tRNA(Gln) + L-glutamine + ATP + H2O = L-glutaminyl-tRNA(Gln) + L-glutamate + ADP + phosphate + H(+). It carries out the reaction L-aspartyl-tRNA(Asn) + L-glutamine + ATP + H2O = L-asparaginyl-tRNA(Asn) + L-glutamate + ADP + phosphate + 2 H(+). Allows the formation of correctly charged Asn-tRNA(Asn) or Gln-tRNA(Gln) through the transamidation of misacylated Asp-tRNA(Asn) or Glu-tRNA(Gln) in organisms which lack either or both of asparaginyl-tRNA or glutaminyl-tRNA synthetases. The reaction takes place in the presence of glutamine and ATP through an activated phospho-Asp-tRNA(Asn) or phospho-Glu-tRNA(Gln). The protein is Aspartyl/glutamyl-tRNA(Asn/Gln) amidotransferase subunit C of Bradyrhizobium diazoefficiens (strain JCM 10833 / BCRC 13528 / IAM 13628 / NBRC 14792 / USDA 110).